Consider the following 261-residue polypeptide: Putative ankyrin repeat protein L99 (261 aa).

7 ANK repeats span residues 21–50 (KVNPLFMDSIESDNVKEVVKFLNQGVDVHA), 51–80 (HEDYALKYSSFKCNLELVKVLISHGANIHS), 81–110 (DRDLALHYAAQQGCFEVVKYLIKNGANVNA), 112–140 (QNSALIRACDSHHYEMIKYLIDKGANIHA), 142–170 (NNFCLRNSVLHHKWEIFTYLMNNGADINA), 171–203 (DNGAALFIAASDNDISAIIMLNAYNADMCIDNC), and 231–259 (NELKALTYAYNNNQYHVFDYLLSKSNINS).

The sequence is that of Putative ankyrin repeat protein L99 from Acanthamoeba polyphaga (Amoeba).